A 499-amino-acid polypeptide reads, in one-letter code: UDP-N-acetylmuramoylalanine--D-glutamate ligase (499 aa).

120 to 126 (GTNGKTT) contacts ATP.

The protein belongs to the MurCDEF family.

The protein resides in the cytoplasm. The enzyme catalyses UDP-N-acetyl-alpha-D-muramoyl-L-alanine + D-glutamate + ATP = UDP-N-acetyl-alpha-D-muramoyl-L-alanyl-D-glutamate + ADP + phosphate + H(+). The protein operates within cell wall biogenesis; peptidoglycan biosynthesis. Its function is as follows. Cell wall formation. Catalyzes the addition of glutamate to the nucleotide precursor UDP-N-acetylmuramoyl-L-alanine (UMA). In Nostoc punctiforme (strain ATCC 29133 / PCC 73102), this protein is UDP-N-acetylmuramoylalanine--D-glutamate ligase.